A 451-amino-acid chain; its full sequence is uncharacterized protein (451 aa).

Positions 2-60 constitute a TRAM domain; sequence VVKVKQKIPLKIKRMGINGEGIGFYQKTLVFVPGALKGENIFCQITAVKRNFAEAKLLT. [4Fe-4S] cluster is bound by residues cysteine 73, cysteine 79, cysteine 82, and cysteine 162. Positions 283, 312, 333, and 381 each coordinate S-adenosyl-L-methionine. The active-site Nucleophile is the cysteine 408.

Belongs to the class I-like SAM-binding methyltransferase superfamily. RNA M5U methyltransferase family.

This is an uncharacterized protein from Streptococcus pyogenes serotype M3 (strain ATCC BAA-595 / MGAS315).